A 299-amino-acid polypeptide reads, in one-letter code: UDP-N-acetylenolpyruvoylglucosamine reductase (299 aa).

Residues 28 to 193 (IGGPVDLMVL…VSALMQLHKE (166 aa)) enclose the FAD-binding PCMH-type domain. Arginine 172 is an active-site residue. The active-site Proton donor is serine 222. Glutamate 292 is a catalytic residue.

It belongs to the MurB family. FAD serves as cofactor.

Its subcellular location is the cytoplasm. It catalyses the reaction UDP-N-acetyl-alpha-D-muramate + NADP(+) = UDP-N-acetyl-3-O-(1-carboxyvinyl)-alpha-D-glucosamine + NADPH + H(+). It functions in the pathway cell wall biogenesis; peptidoglycan biosynthesis. In terms of biological role, cell wall formation. This chain is UDP-N-acetylenolpyruvoylglucosamine reductase, found in Syntrophomonas wolfei subsp. wolfei (strain DSM 2245B / Goettingen).